Reading from the N-terminus, the 187-residue chain is Putative protein 2 (187 aa).

A run of 2 helical transmembrane segments spans residues 10-27 (MLAAFALMTLFLLDNVGV) and 99-121 (VTIIIFLSVVGALLLYMLFLLLV).

Belongs to the TMEM9 family.

The protein resides in the membrane. This Takifugu rubripes (Japanese pufferfish) protein is Putative protein 2.